We begin with the raw amino-acid sequence, 202 residues long: Dephospho-CoA kinase (202 aa).

One can recognise a DPCK domain in the interval 5-202 (ILGLTGGIGS…FYLTLRGGQP (198 aa)). Position 13–18 (13–18 (GSGKSA)) interacts with ATP.

Belongs to the CoaE family.

The protein resides in the cytoplasm. The enzyme catalyses 3'-dephospho-CoA + ATP = ADP + CoA + H(+). It participates in cofactor biosynthesis; coenzyme A biosynthesis; CoA from (R)-pantothenate: step 5/5. In terms of biological role, catalyzes the phosphorylation of the 3'-hydroxyl group of dephosphocoenzyme A to form coenzyme A. The polypeptide is Dephospho-CoA kinase (Stutzerimonas stutzeri (Pseudomonas stutzeri)).